The primary structure comprises 312 residues: Short-chain dehydrogenase/reductase pkfC (312 aa).

3 residues coordinate NADP(+): Lys-56, Asn-108, and Lys-140. The active-site Proton donor is Ser-164. Positions 193 and 197 each coordinate NADP(+). Tyr-193 (proton acceptor) is an active-site residue. Lys-197 acts as the Lowers pKa of active site Tyr in catalysis.

The protein belongs to the short-chain dehydrogenases/reductases (SDR) family.

It participates in secondary metabolite biosynthesis. Short-chain dehydrogenase/reductase; part of the gene cluster that mediates the biosynthesis of aspernidine A, a prenylated isoindolinone. The starting point of the biosynthesis of aspernidin A is the production of orsellinaldehyde by the non-reducing polyketide synthase pkfA. Hydroxylation, methylation of one of the phenol groups, and prenylation, presumably catalyzed by the prenyltransferase pkfE, would be needed to yield aspernidine D. Subsequently, the cytochrome P450 monooxygenase pkfB is responsible for hydroxylation of aspernidine D to yield aspernidine E. The dehydrogenase pkfF may be responsible for further oxidation of aspernidine E to form a dialdehyde intermediate which is further transformed in a series of steps, some of which are enzyme-mediated, to generate aspernidine A. The possibility that additional enzymes outside of the cluster are involved in aspernidine A biosynthesis cannot be excluded. The sequence is that of Short-chain dehydrogenase/reductase pkfC from Emericella nidulans (strain FGSC A4 / ATCC 38163 / CBS 112.46 / NRRL 194 / M139) (Aspergillus nidulans).